The sequence spans 284 residues: 2-dehydro-3-deoxyphosphooctonate aldolase (284 aa).

This sequence belongs to the KdsA family.

The protein localises to the cytoplasm. It carries out the reaction D-arabinose 5-phosphate + phosphoenolpyruvate + H2O = 3-deoxy-alpha-D-manno-2-octulosonate-8-phosphate + phosphate. Its pathway is carbohydrate biosynthesis; 3-deoxy-D-manno-octulosonate biosynthesis; 3-deoxy-D-manno-octulosonate from D-ribulose 5-phosphate: step 2/3. It participates in bacterial outer membrane biogenesis; lipopolysaccharide biosynthesis. The sequence is that of 2-dehydro-3-deoxyphosphooctonate aldolase from Escherichia fergusonii (strain ATCC 35469 / DSM 13698 / CCUG 18766 / IAM 14443 / JCM 21226 / LMG 7866 / NBRC 102419 / NCTC 12128 / CDC 0568-73).